Here is a 649-residue protein sequence, read N- to C-terminus: Lipolysis-stimulated lipoprotein receptor (649 aa).

The segment covering 1–16 (MQQDGLGVGTRNGSGK) has biased composition (gly residues). The disordered stretch occupies residues 1–21 (MQQDGLGVGTRNGSGKGRSVH). Residues 1–259 (MQQDGLGVGT…PGFQAGPIED (259 aa)) are Extracellular-facing. The Ig-like V-type domain maps to 86–234 (PARAIQVTVS…DLQGNNEAYA (149 aa)). The cysteines at positions 111 and 218 are disulfide-linked. The helical transmembrane segment at 260–280 (WLFVVVVCLAAFLIFLLLGIC) threads the bilayer. Over 281 to 649 (WCQCCPHTCC…LALSRESLVV (369 aa)) the chain is Cytoplasmic. The residue at position 336 (Thr-336) is a Phosphothreonine. Phosphoserine is present on residues Ser-365, Ser-371, Ser-389, Ser-432, and Ser-436. The segment at 414-649 (NFDPSRPGPP…LALSRESLVV (236 aa)) is disordered. Basic and acidic residues predominate over residues 426–444 (RVERAMSEVTSLHEDDWRS). Thr-453 bears the Phosphothreonine mark. Phosphoserine occurs at positions 464, 467, and 493. Position 501 is a phosphothreonine (Thr-501). Over residues 502–518 (PPSTAESGSRSPTSNGG) the composition is skewed to polar residues. A phosphoserine mark is found at Ser-528 and Ser-530. Residues 529–565 (RSRDDLYDQDDSRDFPRSRDPHYDDFRSRERPPADPR) are compositionally biased toward basic and acidic residues. Tyr-535 bears the Phosphotyrosine mark. Residues Ser-540 and Ser-579 each carry the phosphoserine modification. Residues 589 to 609 (RLLEEAVRKKGSEERRRPHKE) show a composition bias toward basic and acidic residues. Phosphoserine is present on Ser-631. Lys-638 is covalently cross-linked (Glycyl lysine isopeptide (Lys-Gly) (interchain with G-Cter in ubiquitin)). Phosphoserine occurs at positions 643 and 646.

This sequence belongs to the immunoglobulin superfamily. LISCH7 family. As to quaternary structure, homotrimer or homotetramer. Assembles into cell-cell contacts. Interacts (via the cytoplasmic domain) with MARVELD2 (via C-terminal cytoplasmic domain); the interaction is required to recruit MARVELD2 to tricellular contacts. Interacts with OCLN. Phosphorylation at Ser-365 by MAPK8/JNK1 and MAPK9/JNK2 may be required for exclusive localization at tricellular tight junstions. Post-translationally, polyubiquitinated at Lys-638 via 'Lys-63'-linked ubiquitin chains; deubiquitinated by USP53.

Its subcellular location is the cell membrane. It localises to the cell junction. The protein resides in the tight junction. Probable role in the clearance of triglyceride-rich lipoprotein from blood. Binds chylomicrons, LDL and VLDL in presence of free fatty acids and allows their subsequent uptake in the cells. Maintains epithelial barrier function by recruiting MARVELD2/tricellulin to tricellular tight junctions. This chain is Lipolysis-stimulated lipoprotein receptor, found in Homo sapiens (Human).